A 159-amino-acid polypeptide reads, in one-letter code: MAIEGLIKQGFVTMSLDRVINWARTGSLWPMTFGLACCAVEMMEAGSSRYDLDRFGIVFRPTPRQSDLMIVAGTLTNKMAPALRKVYDQMPEPKWVISMGSCANGGGYYHYSYAVIRGCDRIVPVDIYVPGCPPTAEALLYGIMQLQDKIRRTNTIART.

4 residues coordinate [4Fe-4S] cluster: Cys-37, Cys-38, Cys-102, and Cys-132.

The protein belongs to the complex I 20 kDa subunit family. As to quaternary structure, NDH-1 is composed of 14 different subunits. Subunits NuoB, C, D, E, F, and G constitute the peripheral sector of the complex. Requires [4Fe-4S] cluster as cofactor.

The protein resides in the cell inner membrane. It carries out the reaction a quinone + NADH + 5 H(+)(in) = a quinol + NAD(+) + 4 H(+)(out). In terms of biological role, NDH-1 shuttles electrons from NADH, via FMN and iron-sulfur (Fe-S) centers, to quinones in the respiratory chain. Couples the redox reaction to proton translocation (for every two electrons transferred, four hydrogen ions are translocated across the cytoplasmic membrane), and thus conserves the redox energy in a proton gradient. In Vesicomyosocius okutanii subsp. Calyptogena okutanii (strain HA), this protein is NADH-quinone oxidoreductase subunit B.